Here is a 211-residue protein sequence, read N- to C-terminus: Dual specificity protein phosphatase 26 (211 aa).

Positions 60–207 (NHADEVWPGL…LLALDRRLRQ (148 aa)) constitute a Tyrosine-protein phosphatase domain. Cys-152 functions as the Phosphocysteine intermediate in the catalytic mechanism.

The protein belongs to the protein-tyrosine phosphatase family. Non-receptor class dual specificity subfamily. As to quaternary structure, interacts with HSF4.

Its subcellular location is the cytoplasm. It localises to the nucleus. The protein localises to the golgi apparatus. The enzyme catalyses O-phospho-L-tyrosyl-[protein] + H2O = L-tyrosyl-[protein] + phosphate. It catalyses the reaction O-phospho-L-seryl-[protein] + H2O = L-seryl-[protein] + phosphate. The catalysed reaction is O-phospho-L-threonyl-[protein] + H2O = L-threonyl-[protein] + phosphate. In terms of biological role, inactivates MAPK1 and MAPK3 which leads to dephosphorylation of heat shock factor protein 4 and a reduction in its DNA-binding activity. This chain is Dual specificity protein phosphatase 26 (DUSP26), found in Bos taurus (Bovine).